A 431-amino-acid polypeptide reads, in one-letter code: Enolase (431 aa).

Position 166 (glutamine 166) interacts with (2R)-2-phosphoglycerate. The active-site Proton donor is the glutamate 208. Mg(2+)-binding residues include aspartate 245, glutamate 288, and aspartate 315. The (2R)-2-phosphoglycerate site is built by lysine 340, arginine 369, serine 370, and lysine 391. Lysine 340 acts as the Proton acceptor in catalysis.

The protein belongs to the enolase family. Mg(2+) is required as a cofactor.

The protein resides in the cytoplasm. Its subcellular location is the secreted. The protein localises to the cell surface. The catalysed reaction is (2R)-2-phosphoglycerate = phosphoenolpyruvate + H2O. Its pathway is carbohydrate degradation; glycolysis; pyruvate from D-glyceraldehyde 3-phosphate: step 4/5. Functionally, catalyzes the reversible conversion of 2-phosphoglycerate (2-PG) into phosphoenolpyruvate (PEP). It is essential for the degradation of carbohydrates via glycolysis. The polypeptide is Enolase (Clostridium botulinum (strain Eklund 17B / Type B)).